A 138-amino-acid polypeptide reads, in one-letter code: UPF0047 protein MJ1081 (138 aa).

This sequence belongs to the UPF0047 family.

This is UPF0047 protein MJ1081 from Methanocaldococcus jannaschii (strain ATCC 43067 / DSM 2661 / JAL-1 / JCM 10045 / NBRC 100440) (Methanococcus jannaschii).